A 204-amino-acid polypeptide reads, in one-letter code: Histone chaperone ASF1A (204 aa).

An interaction with histone H3, CHAF1B, and HIRA region spans residues 1–156; the sequence is MAKVQVNNVV…TRFHINWEDN (156 aa). Positions 31 to 37 match the Required for interaction with HIRA motif; that stretch reads IEDLSED. A required for interaction with HIRA region spans residues 155–204; it reads DNTEKLEDAESSNPNLPSLLSTDALPSASKGWSTSENSLNVMLESHMDCM. Phosphoserine; by TLK2 is present on S192.

Belongs to the ASF1 family. As to quaternary structure, interacts with histone H3 (via C-terminus), including histone H3.1, H3.2 and H3.3, and histone H4; the interaction with H3 is direct. Probably interacts with the heterodimeric form of H3-H4 taking the place of the second dimer. Interacts with the CHAF1A, CHAF1B and RBBP4 subunits of the CAF-1 complex. Interacts with CABIN1, HAT1, HIRA, NASP, TAF1 and UBN1. Found in a soluble complex with NASP and histones H3 and H4; the interaction with NASP is probably indirect and mediated by H3-H4. Interacts with CDAN1. Found in a cytosolic complex with IPO4 and histones H3 and H4. Interacts with CREBBP. In terms of processing, phosphorylated by TLK1 and TLK2. Highly phosphorylated in S-phase and at lower levels in M-phase. TLK2-mediated phosphorylation at Ser-192 prevents proteasome-dependent degradation.

The protein resides in the nucleus. Its function is as follows. Histone chaperone that facilitates histone deposition and histone exchange and removal during nucleosome assembly and disassembly. Cooperates with chromatin assembly factor 1 (CAF-1) to promote replication-dependent chromatin assembly and with HIRA to promote replication-independent chromatin assembly. Promotes homologous recombination-mediated repair of double-strand breaks (DSBs) at stalled or collapsed replication forks: acts by mediating histone replacement at DSBs, leading to recruitment of the MMS22L-TONSL complex and subsequent loading of RAD51. Also involved in the nuclear import of the histone H3-H4 dimer together with importin-4 (IPO4): specifically recognizes and binds newly synthesized histones with the monomethylation of H3 'Lys-9' and acetylation at 'Lys-14' (H3K9me1K14ac) marks, and diacetylation at 'Lys-5' and 'Lys-12' of H4 (H4K5K12ac) marks in the cytosol. Required for the formation of senescence-associated heterochromatin foci (SAHF) and efficient senescence-associated cell cycle exit. The chain is Histone chaperone ASF1A (ASF1A) from Bos taurus (Bovine).